The sequence spans 180 residues: Large ribosomal subunit protein uL16 (180 aa).

This sequence belongs to the universal ribosomal protein uL16 family.

This is Large ribosomal subunit protein uL16 from Thermococcus sibiricus (strain DSM 12597 / MM 739).